Consider the following 280-residue polypeptide: tRNA(Ile)-lysidine synthase, plastid (280 aa).

28–33 contacts ATP; it reads SAGQDS.

The protein belongs to the tRNA(Ile)-lysidine synthase family.

Its subcellular location is the plastid. The enzyme catalyses cytidine(34) in tRNA(Ile2) + L-lysine + ATP = lysidine(34) in tRNA(Ile2) + AMP + diphosphate + H(+). Ligates lysine onto the cytidine present at position 34 of the AUA codon-specific tRNA(Ile) that contains the anticodon CAU, in an ATP-dependent manner. Cytidine is converted to lysidine, thus changing the amino acid specificity of the tRNA from methionine to isoleucine. This chain is tRNA(Ile)-lysidine synthase, plastid (tilS), found in Helicosporidium sp. subsp. Simulium jonesii (Green alga).